Here is a 75-residue protein sequence, read N- to C-terminus: UPF0057 membrane protein At2g24040 (75 aa).

2 consecutive transmembrane segments (helical) span residues 4 to 24 (SCEL…GVCL) and 33 to 53 (FFIC…YAIY).

This sequence belongs to the UPF0057 (PMP3) family.

Its subcellular location is the membrane. The protein is UPF0057 membrane protein At2g24040 of Arabidopsis thaliana (Mouse-ear cress).